The following is a 745-amino-acid chain: MAGSGGGVVSGGRQRGPPLFATEKPGRMAMAAYRVSAATVFAGVLLIWLYRATHLPPGGGDGVRRWAWLGMLAAELWFGFYWVLTLSVRWCPVYRRTFKDRLAQSYSEDELPSVDIFVCTADPTAEPPMLVISTVLSVMAYDYLPEKLNIYLSDDAGSVLTFYVLCEASEFAKHWIPFCKKYKVEPRSPAAYFAKVASPPDGCGPKEWFTMKELYKDMTDRVNSVVNSGRIPEVPRCHSRGFSQWNENFTSSDHPSIVQILIDSNKQKAVDIDGNALPTLVYMAREKKPQKQHHFKAGSLNALIRVSSVISNSPIIMNVDCDMYSNNSESIRDALCFFLDEEQGQDIGFVQYPQNFENVVHNDIYGHPINVVNELDHPCLDGWGGMCYYGTGCFHRREALCGRIYSQEYKEDWTRVAGRTEDANELEEMGRSLVTCTYEHNTIWGIEKGVRYGCPLEDVTTGLQIQCRGWRSVYYNPKRKGFLGMTPTSLGQILVLYKRWTEGFLQISLSRYSPFLLGHGKIKLGLQMGYSVCGFWAVNSFPTLYYVTIPSLCFLNGISLFPEKTSPWFIPFAYVMVAAYSCSLAESLQCGDSAVEWWNAQRMWLIRRITSYLLATIDTFRRILGISESGFNLTVKVTDLQALERYKKGMMEFGSFSAMFVILTTVALLNLACMVLGISRVLLQEGPGGLETLFLQAVLCVLIVAINSPVYEALFLRRDKGSLPASVARVSICFVLPLCILSICK.

Positions 1–14 (MAGSGGGVVSGGRQ) are enriched in gly residues. The tract at residues 1–20 (MAGSGGGVVSGGRQRGPPLF) is disordered. 2 consecutive transmembrane segments (helical) span residues 29–49 (AMAAYRVSAATVFAGVLLIWL) and 66–86 (WAWLGMLAAELWFGFYWVLTL). Catalysis depends on residues Asp-155 and Asp-458. A run of 5 helical transmembrane segments spans residues 541–561 (FPTLYYVTIPSLCFLNGISLF), 568–588 (WFIPFAYVMVAAYSCSLAESL), 658–678 (AMFVILTTVALLNLACMVLGI), 686–706 (GPGGLETLFLQAVLCVLIVAI), and 723–743 (LPASVARVSICFVLPLCILSI).

It belongs to the glycosyltransferase 2 family. Plant cellulose synthase-like E subfamily.

It localises to the golgi apparatus membrane. In terms of biological role, thought to be a Golgi-localized beta-glycan synthase that polymerize the backbones of noncellulosic polysaccharides (hemicelluloses) of plant cell wall. The polypeptide is Cellulose synthase-like protein E2 (CSLE2) (Oryza sativa subsp. japonica (Rice)).